The following is a 102-amino-acid chain: Large ribosomal subunit protein bL21 (102 aa).

It belongs to the bacterial ribosomal protein bL21 family. Part of the 50S ribosomal subunit. Contacts protein L20.

Functionally, this protein binds to 23S rRNA in the presence of protein L20. In Oceanobacillus iheyensis (strain DSM 14371 / CIP 107618 / JCM 11309 / KCTC 3954 / HTE831), this protein is Large ribosomal subunit protein bL21.